The primary structure comprises 917 residues: Isoleucine--tRNA ligase (917 aa).

The 'HIGH' region motif lies at 57-67 (PYANGNLHMGH). Position 554 (Glu554) interacts with L-isoleucyl-5'-AMP. Residues 595–599 (KMSKS) carry the 'KMSKS' region motif. Lys598 contributes to the ATP binding site. Zn(2+) is bound by residues Cys886, Cys889, Cys906, and Cys909.

This sequence belongs to the class-I aminoacyl-tRNA synthetase family. IleS type 1 subfamily. As to quaternary structure, monomer. It depends on Zn(2+) as a cofactor.

The protein resides in the cytoplasm. The enzyme catalyses tRNA(Ile) + L-isoleucine + ATP = L-isoleucyl-tRNA(Ile) + AMP + diphosphate. Functionally, catalyzes the attachment of isoleucine to tRNA(Ile). As IleRS can inadvertently accommodate and process structurally similar amino acids such as valine, to avoid such errors it has two additional distinct tRNA(Ile)-dependent editing activities. One activity is designated as 'pretransfer' editing and involves the hydrolysis of activated Val-AMP. The other activity is designated 'posttransfer' editing and involves deacylation of mischarged Val-tRNA(Ile). In Staphylococcus aureus (strain Mu3 / ATCC 700698), this protein is Isoleucine--tRNA ligase.